The following is a 954-amino-acid chain: Alpha-xylosidase BoGH31A (954 aa).

Positions M1–A20 are cleaved as a signal peptide. A lipid anchor (N-palmitoyl cysteine) is attached at C21. Residue C21 is the site of S-diacylglycerol cysteine attachment. One can recognise a PA14 domain in the interval T227 to W366. Catalysis depends on residues D553 and E556. The active-site Proton donor is the D630.

This sequence belongs to the glycosyl hydrolase 31 family.

The protein localises to the cell inner membrane. The catalysed reaction is Hydrolysis of terminal, non-reducing alpha-D-xylose residues with release of alpha-D-xylose.. Its pathway is glucan metabolism; xyloglucan degradation. Functionally, catalyzes the liberation of alpha-xylose from the non-reducing terminal glucose of xyloglucan oligosaccharides in xyloglucan degradation, converting the 'X' to 'G' units. The polypeptide is Alpha-xylosidase BoGH31A (Bacteroides ovatus (strain ATCC 8483 / DSM 1896 / JCM 5824 / BCRC 10623 / CCUG 4943 / NCTC 11153)).